The chain runs to 92 residues: Elongation factor 1-beta (92 aa).

The protein belongs to the EF-1-beta/EF-1-delta family.

Its function is as follows. Promotes the exchange of GDP for GTP in EF-1-alpha/GDP, thus allowing the regeneration of EF-1-alpha/GTP that could then be used to form the ternary complex EF-1-alpha/GTP/AAtRNA. In Pyrobaculum aerophilum (strain ATCC 51768 / DSM 7523 / JCM 9630 / CIP 104966 / NBRC 100827 / IM2), this protein is Elongation factor 1-beta (ef1b).